We begin with the raw amino-acid sequence, 125 residues long: Protein ApaG (125 aa).

An ApaG domain is found at 1–125 (MINSPRVCIQ…FRLAVPTLIH (125 aa)).

The chain is Protein ApaG from Citrobacter koseri (strain ATCC BAA-895 / CDC 4225-83 / SGSC4696).